Here is a 297-residue protein sequence, read N- to C-terminus: Rhomboid-type serine protease 2 (297 aa).

6 helical membrane-spanning segments follow: residues 14–34 (IQHP…IFLL), 60–80 (ISFY…LVAL), 98–118 (IVLN…SIGF), 120–140 (PDEA…YWAI), 155–175 (LVVP…IVIP), and 179–199 (FIGH…YLDV). The Nucleophile role is filled by S128. Residue H182 is part of the active site. The disordered stretch occupies residues 268–297 (DLEAGTRSRGNSSVDPTTSFPGTGQTLGTQ). Positions 275 to 297 (SRGNSSVDPTTSFPGTGQTLGTQ) are enriched in polar residues.

Belongs to the peptidase S54 family.

The protein localises to the golgi apparatus membrane. It is found in the golgi apparatus. The protein resides in the cis-Golgi network membrane. It catalyses the reaction Cleaves type-1 transmembrane domains using a catalytic dyad composed of serine and histidine that are contributed by different transmembrane domains.. Its function is as follows. Probable rhomboid-type serine protease that catalyzes intramembrane proteolysis. This is Rhomboid-type serine protease 2 (RBD2) from Yarrowia lipolytica (strain CLIB 122 / E 150) (Yeast).